The chain runs to 456 residues: Hydroxyproline dehydrogenase (456 aa).

2 positions are modified to N6-acetyllysine: Lys-310 and Lys-320.

It belongs to the proline oxidase family. It depends on FAD as a cofactor.

The catalysed reaction is trans-4-hydroxy-L-proline + a quinone = (3R,5S)-1-pyrroline-3-hydroxy-5-carboxylate + a quinol + H(+). The enzyme catalyses L-proline + a quinone = (S)-1-pyrroline-5-carboxylate + a quinol + H(+). Functionally, dehydrogenase that converts trans-4-L-hydroxyproline to delta-1-pyrroline-3-hydroxy-5-carboxylate (Hyp) using ubiquinone-10 as the terminal electron acceptor. Can also use proline as a substrate but with a very much lower efficiency. Does not react with other diastereomers of Hyp: trans-4-D-hydroxyproline and cis-4-L-hydroxyproline. Ubiquininone analogs such as menadione, duroquinone and ubiquinone-1 react more efficiently than oxygen as the terminal electron acceptor during catalysis. This is Hydroxyproline dehydrogenase from Mus musculus (Mouse).